The chain runs to 141 residues: Small ribosomal subunit protein uS8 (141 aa).

Belongs to the universal ribosomal protein uS8 family. Part of the 30S ribosomal subunit. Contacts proteins S5 and S12.

In terms of biological role, one of the primary rRNA binding proteins, it binds directly to 16S rRNA central domain where it helps coordinate assembly of the platform of the 30S subunit. The polypeptide is Small ribosomal subunit protein uS8 (Mycoplasma genitalium (strain ATCC 33530 / DSM 19775 / NCTC 10195 / G37) (Mycoplasmoides genitalium)).